Reading from the N-terminus, the 484-residue chain is Aspartyl/glutamyl-tRNA(Asn/Gln) amidotransferase subunit B (484 aa).

Belongs to the GatB/GatE family. GatB subfamily. Heterotrimer of A, B and C subunits.

It catalyses the reaction L-glutamyl-tRNA(Gln) + L-glutamine + ATP + H2O = L-glutaminyl-tRNA(Gln) + L-glutamate + ADP + phosphate + H(+). The enzyme catalyses L-aspartyl-tRNA(Asn) + L-glutamine + ATP + H2O = L-asparaginyl-tRNA(Asn) + L-glutamate + ADP + phosphate + 2 H(+). In terms of biological role, allows the formation of correctly charged Asn-tRNA(Asn) or Gln-tRNA(Gln) through the transamidation of misacylated Asp-tRNA(Asn) or Glu-tRNA(Gln) in organisms which lack either or both of asparaginyl-tRNA or glutaminyl-tRNA synthetases. The reaction takes place in the presence of glutamine and ATP through an activated phospho-Asp-tRNA(Asn) or phospho-Glu-tRNA(Gln). The protein is Aspartyl/glutamyl-tRNA(Asn/Gln) amidotransferase subunit B of Anaeromyxobacter sp. (strain K).